We begin with the raw amino-acid sequence, 481 residues long: Cytochrome c oxidase subunit 1 (481 aa).

Residues 22–42 traverse the membrane as a helical segment; it reads ISYLWLAYWFGMIGFYMSVLI. Ca(2+) contacts are provided by Glu45 and Gly50. The next 8 membrane-spanning stretches (helical) occupy residues 64–84, 109–129, 151–171, 194–214, 240–260, 278–298, 309–329, and 343–363; these read LLFTLHGLIMVFFNIMTGLFG, SLLFQPIGFVLVVSSIYLEIG, FIIFGLLAAGIASTLSSVNFI, IVLTSFLLLLSLPVVTAVFLM, LFWFFGHPEVYIMILPGFGII, MILAMGFNSFVRLFGLGTSYV, YFTTVTILIALPTGNKIFNWV, and LVLFTVLFIVNFVIGGTTGVV. His69 serves as a coordination point for Fe(II)-heme a. His246 is a binding site for Cu cation. Residues 246-250 constitute a cross-link (1'-histidyl-3'-tyrosine (His-Tyr)); that stretch reads HPEVY. Tyr250 contributes to the O2 binding site. Residues His374 and Asp375 each contribute to the Mg(2+) site. His382 provides a ligand contact to heme a3. The next 2 membrane-spanning stretches (helical) occupy residues 382–402 and 420–440; these read HFHFVLSIGAIISMICFIIYI and IAPIFMISVLLTFLPMHFTGF. Fe(II)-heme a is bound at residue His384. Pro448 is a Ca(2+) binding site. A helical transmembrane segment spans residues 459-479; the sequence is FICTLGATMMLVLKLAILFII.

This sequence belongs to the heme-copper respiratory oxidase family. In terms of assembly, component of the cytochrome c oxidase (complex IV, CIV), a multisubunit enzyme composed of a catalytic core of 3 subunits and several supernumerary subunits. The complex exists as a monomer or a dimer and forms supercomplexes (SCs) in the inner mitochondrial membrane with ubiquinol-cytochrome c oxidoreductase (cytochrome b-c1 complex, complex III, CIII). The cofactor is heme. Cu cation serves as cofactor.

It is found in the mitochondrion inner membrane. It catalyses the reaction 4 Fe(II)-[cytochrome c] + O2 + 8 H(+)(in) = 4 Fe(III)-[cytochrome c] + 2 H2O + 4 H(+)(out). Its pathway is energy metabolism; oxidative phosphorylation. Its function is as follows. Component of the cytochrome c oxidase, the last enzyme in the mitochondrial electron transport chain which drives oxidative phosphorylation. The respiratory chain contains 3 multisubunit complexes succinate dehydrogenase (complex II, CII), ubiquinol-cytochrome c oxidoreductase (cytochrome b-c1 complex, complex III, CIII) and cytochrome c oxidase (complex IV, CIV), that cooperate to transfer electrons derived from NADH and succinate to molecular oxygen, creating an electrochemical gradient over the inner membrane that drives transmembrane transport and the ATP synthase. Cytochrome c oxidase is the component of the respiratory chain that catalyzes the reduction of oxygen to water. Electrons originating from reduced cytochrome c in the intermembrane space (IMS) are transferred via the dinuclear copper A center (CU(A)) of subunit 2 and heme A of subunit 1 to the active site in subunit 1, a binuclear center (BNC) formed by heme A3 and copper B (CU(B)). The BNC reduces molecular oxygen to 2 water molecules using 4 electrons from cytochrome c in the IMS and 4 protons from the mitochondrial matrix. This is Cytochrome c oxidase subunit 1 (MT-CO1) from Theileria parva (East coast fever infection agent).